A 656-amino-acid chain; its full sequence is PAN2-PAN3 deadenylation complex subunit PAN3 (656 aa).

The C3H1-type zinc finger occupies 15–44; the sequence is SFKGTQCRNIIIHGYCKFENEGCQFNHGNS. Positions 71–104 are disordered; that stretch reads KTSSSFTPGKSPAVRSPDFSSLPAFQPGAPVNDQ. Positions 128–148 match the PABPC-interacting motif-2 (PAM-2) motif; sequence AFAPSFNPYASESFTPSVSAG. A pseudokinase domain region spans residues 271-525; it reads QVFPRGSLPD…NIEDFTKLFS (255 aa). Residues Arg325, 375–382, and 428–429 contribute to the ATP site; these read DYYPQSQS and KK. The stretch at 526 to 564 forms a coiled coil; sequence HKVLSVVNSLQYNSEYLEQQLSRELENARLFRLMCKLNA. The segment at 565–656 is knob domain; sequence IYGRLESRID…IDSTFRALTQ (92 aa).

The protein belongs to the protein kinase superfamily. PAN3 family. As to quaternary structure, homodimer. Forms a heterotrimer with a catalytic subunit PAN2 to form the poly(A)-nuclease (PAN) deadenylation complex. Interacts (via PAM-2 motif) with poly(A)-binding protein PAB1 (via PABC domain), conferring substrate specificity of the enzyme complex.

The protein resides in the cytoplasm. Regulatory subunit of the poly(A)-nuclease (PAN) deadenylation complex, one of two cytoplasmic mRNA deadenylases involved in mRNA turnover. PAN specifically shortens poly(A) tails of RNA and the activity is stimulated by poly(A)-binding protein PAB1. PAN deadenylation is followed by rapid degradation of the shortened mRNA tails by the CCR4-NOT complex. Deadenylated mRNAs are then degraded by two alternative mechanisms, namely exosome-mediated 3'-5' exonucleolytic degradation, or deadenylation-dependent mRNA decaping and subsequent 5'-3' exonucleolytic degradation by XRN1. May also be involved in post-transcriptional maturation of mRNA poly(A) tails. PAN3 acts as a positive regulator for PAN activity, recruiting the catalytic subunit PAN2 to mRNA via its interaction with RNA and with PAB1. This Kluyveromyces lactis (strain ATCC 8585 / CBS 2359 / DSM 70799 / NBRC 1267 / NRRL Y-1140 / WM37) (Yeast) protein is PAN2-PAN3 deadenylation complex subunit PAN3.